Consider the following 851-residue polypeptide: DNA mismatch repair protein MutS (851 aa).

602–609 (GPNMSGKS) is a binding site for ATP.

It belongs to the DNA mismatch repair MutS family.

This protein is involved in the repair of mismatches in DNA. It is possible that it carries out the mismatch recognition step. This protein has a weak ATPase activity. This Streptococcus equi subsp. equi (strain 4047) protein is DNA mismatch repair protein MutS.